Here is a 306-residue protein sequence, read N- to C-terminus: Curved DNA-binding protein (306 aa).

A J domain is found at 5-69 (DYYAIMGVKP…QRRAEYDQMW (65 aa)).

It is found in the cytoplasm. The protein resides in the nucleoid. Functionally, DNA-binding protein that preferentially recognizes a curved DNA sequence. It is probably a functional analog of DnaJ; displays overlapping activities with DnaJ, but functions under different conditions, probably acting as a molecular chaperone in an adaptive response to environmental stresses other than heat shock. Lacks autonomous chaperone activity; binds native substrates and targets them for recognition by DnaK. Its activity is inhibited by the binding of CbpM. In Shigella boydii serotype 18 (strain CDC 3083-94 / BS512), this protein is Curved DNA-binding protein.